The sequence spans 191 residues: Small ribosomal subunit protein uS4A (191 aa).

Ser-50 and Ser-161 each carry phosphoserine. In terms of domain architecture, S4 RNA-binding spans 107–181 (RRLQTQVFKL…CKRKRLRSQE (75 aa)). Tyr-164 carries the post-translational modification Phosphotyrosine. The tract at residues 166-191 (GGRPGRCKRKRLRSQEGGEGEEAEEE) is disordered. Phosphoserine is present on Ser-179.

Belongs to the universal ribosomal protein uS4 family. In terms of assembly, component of the small ribosomal subunit (SSU). Mature yeast ribosomes consist of a small (40S) and a large (60S) subunit. The 40S small subunit contains 1 molecule of ribosomal RNA (18S rRNA) and at least 33 different proteins. The large 60S subunit contains 3 rRNA molecules (25S, 5.8S and 5S rRNA) and at least 46 different proteins. Interacts with snoRNA U3. uS11 interacts with MPP10. Component of the ribosomal small subunit (SSU) processome composed of at least 40 protein subunits and snoRNA U3.

It localises to the cytoplasm. Functionally, component of the ribosome, a large ribonucleoprotein complex responsible for the synthesis of proteins in the cell. The small ribosomal subunit (SSU) binds messenger RNAs (mRNAs) and translates the encoded message by selecting cognate aminoacyl-transfer RNA (tRNA) molecules. The large subunit (LSU) contains the ribosomal catalytic site termed the peptidyl transferase center (PTC), which catalyzes the formation of peptide bonds, thereby polymerizing the amino acids delivered by tRNAs into a polypeptide chain. The nascent polypeptides leave the ribosome through a tunnel in the LSU and interact with protein factors that function in enzymatic processing, targeting, and the membrane insertion of nascent chains at the exit of the ribosomal tunnel. uS4 is involved in nucleolar processing of pre-18S ribosomal RNA and ribosome assembly. This Schizosaccharomyces pombe (strain 972 / ATCC 24843) (Fission yeast) protein is Small ribosomal subunit protein uS4A (rps901).